The sequence spans 437 residues: uncharacterized protein (437 aa).

Over residues 63 to 87 (PSSANVSFQNSDDNLSTSRGRSASP) the composition is skewed to polar residues. Disordered stretches follow at residues 63 to 97 (PSSA…SNFP), 112 to 147 (VKKD…KKET), and 346 to 437 (PKNA…YSIW). Residues 399–409 (EALSPSKSNPD) are compositionally biased toward polar residues. Over residues 425–437 (KKPSSSSSNYSIW) the composition is skewed to low complexity.

This is an uncharacterized protein from Caenorhabditis elegans.